An 818-amino-acid chain; its full sequence is Phenylalanine--tRNA ligase beta subunit (818 aa).

In terms of domain architecture, tRNA-binding spans 39-148; that stretch reads AAELQKFEVA…EDAVVGENFT (110 aa). One can recognise a B5 domain in the interval 423–498; that stretch reads SQKKPLDFSA…RIYGYDKIES (76 aa). The Mg(2+) site is built by aspartate 476, aspartate 482, glutamate 485, and glutamate 486. The FDX-ACB domain occupies 724 to 817; that stretch reads SDFQANFRDY…ISQKFQGTLR (94 aa).

This sequence belongs to the phenylalanyl-tRNA synthetase beta subunit family. Type 1 subfamily. In terms of assembly, tetramer of two alpha and two beta subunits. It depends on Mg(2+) as a cofactor.

Its subcellular location is the cytoplasm. The catalysed reaction is tRNA(Phe) + L-phenylalanine + ATP = L-phenylalanyl-tRNA(Phe) + AMP + diphosphate + H(+). The sequence is that of Phenylalanine--tRNA ligase beta subunit from Rickettsia conorii (strain ATCC VR-613 / Malish 7).